We begin with the raw amino-acid sequence, 468 residues long: MTRHHSAPRNLPRAQLYAERAFATLERFLHVEAVSGAVLLAAAAIALVWANSAFAHSYHALWHAPLSFRLGSYEFAQPLHFWINDALMTLFFLAVGMEIRREIHEGALSNFRQAALPLAAALGGVVAPALIYLAFNGQAPRSAGWAVPTATDIAFAVGVLALLGRAIPGNVRIFLLALAIIDDIIAVLIIAFFYSGGLDYSGFAVAALGIAIVLGLQRIGIGTAYAYVLPGAIVWTGLLMTGAHPTLAGVVLGLMTPVVPRRMREQPLEMMSRATRELAGWYQAQPAAESGAPTLPLRQLRVAQREILPPVVRVQAALHPWVAYAIMPLFALANAGVSLDGVDLAAGGSHWVMAGVAGALIVGKPAGVIAMSWLLVRLGWCRLPPGVTWGGIVLIGLLAGVGFTMSIFIAMLAFAGDANMLGAAKLGVLLGSLATAMLGLAWGAIYARRLRGASATRGTAQAPDSAHS.

The next 12 membrane-spanning stretches (helical) occupy residues 28–48 (FLHV…IALV), 79–99 (LHFW…GMEI), 115–135 (ALPL…YLAF), 143–163 (AGWA…LALL), 173–193 (IFLL…IAFF), 196–216 (GGLD…VLGL), 219–239 (IGIG…TGLL), 240–260 (MTGA…PVVP), 317–337 (ALHP…NAGV), 356–376 (VAGA…WLLV), 392–412 (IVLI…IAML), and 426–446 (LGVL…GAIY).

Belongs to the NhaA Na(+)/H(+) (TC 2.A.33) antiporter family.

The protein localises to the cell inner membrane. It catalyses the reaction Na(+)(in) + 2 H(+)(out) = Na(+)(out) + 2 H(+)(in). Functionally, na(+)/H(+) antiporter that extrudes sodium in exchange for external protons. This is Na(+)/H(+) antiporter NhaA from Bordetella petrii (strain ATCC BAA-461 / DSM 12804 / CCUG 43448).